We begin with the raw amino-acid sequence, 245 residues long: tRNA1(Val) (adenine(37)-N6)-methyltransferase (245 aa).

Belongs to the methyltransferase superfamily. tRNA (adenine-N(6)-)-methyltransferase family.

Its subcellular location is the cytoplasm. The catalysed reaction is adenosine(37) in tRNA1(Val) + S-adenosyl-L-methionine = N(6)-methyladenosine(37) in tRNA1(Val) + S-adenosyl-L-homocysteine + H(+). Functionally, specifically methylates the adenine in position 37 of tRNA(1)(Val) (anticodon cmo5UAC). The chain is tRNA1(Val) (adenine(37)-N6)-methyltransferase from Enterobacter sp. (strain 638).